A 245-amino-acid polypeptide reads, in one-letter code: 1-(5-phosphoribosyl)-5-[(5-phosphoribosylamino)methylideneamino] imidazole-4-carboxamide isomerase (245 aa).

The active-site Proton acceptor is the aspartate 7. Catalysis depends on aspartate 129, which acts as the Proton donor.

The protein belongs to the HisA/HisF family.

It is found in the cytoplasm. The enzyme catalyses 1-(5-phospho-beta-D-ribosyl)-5-[(5-phospho-beta-D-ribosylamino)methylideneamino]imidazole-4-carboxamide = 5-[(5-phospho-1-deoxy-D-ribulos-1-ylimino)methylamino]-1-(5-phospho-beta-D-ribosyl)imidazole-4-carboxamide. Its pathway is amino-acid biosynthesis; L-histidine biosynthesis; L-histidine from 5-phospho-alpha-D-ribose 1-diphosphate: step 4/9. The polypeptide is 1-(5-phosphoribosyl)-5-[(5-phosphoribosylamino)methylideneamino] imidazole-4-carboxamide isomerase (Pectobacterium carotovorum subsp. carotovorum (strain PC1)).